A 185-amino-acid chain; its full sequence is NOP protein chaperone 1 (185 aa).

A disordered region spans residues 1 to 40 (MEVHGKPKASPSCSSPTRDSSGVPVSKELLTAGSDGRGGI). Low complexity predominate over residues 10–21 (SPSCSSPTRDSS). A phosphoserine mark is found at Ser34 and Ser66. Residues 118-185 (FEMNQSDSKE…LDSPASKKKK (68 aa)) form a disordered region. Residues 143–152 (SESEDEDDSI) show a composition bias toward acidic residues. Ser178 is subject to Phosphoserine.

As to quaternary structure, interacts with NOP58, RUVBL1 and RUVBL2; the interactions are direct and NOPCHAP1 bridges the association of NOP58 with RUVBL1:RUVBL2 even in absence of snoRNAs. The interactions with RUVBL1 and RUVBL2 are disrupted upon ATP binding.

The protein resides in the nucleus. In terms of biological role, client-loading PAQosome/R2TP complex cofactor that selects NOP58 to promote box C/D small nucleolar ribonucleoprotein (snoRNP) assembly. Acts as a bridge between NOP58 and the R2TP complex via RUVBL1:RUVBL2. In Homo sapiens (Human), this protein is NOP protein chaperone 1.